Here is a 545-residue protein sequence, read N- to C-terminus: Glucose-6-phosphate isomerase (545 aa).

Glutamate 351 serves as the catalytic Proton donor. Catalysis depends on residues histidine 382 and lysine 510.

It belongs to the GPI family.

It is found in the cytoplasm. The enzyme catalyses alpha-D-glucose 6-phosphate = beta-D-fructose 6-phosphate. The protein operates within carbohydrate biosynthesis; gluconeogenesis. Its pathway is carbohydrate degradation; glycolysis; D-glyceraldehyde 3-phosphate and glycerone phosphate from D-glucose: step 2/4. Catalyzes the reversible isomerization of glucose-6-phosphate to fructose-6-phosphate. This Helicobacter pylori (strain Shi470) protein is Glucose-6-phosphate isomerase.